A 437-amino-acid polypeptide reads, in one-letter code: UDP-glucuronate 4-epimerase 4 (437 aa).

A helical transmembrane segment spans residues 30-50 (SLTKFAFFSFFLLCLISLLFL). The disordered stretch occupies residues 56–76 (INPSSPSDPSRRSLRTNTYGG). A helical membrane pass occupies residues 96–116 (GITVLVTGAAGFVGTHVSAAL). 98-129 (TVLVTGAAGFVGTHVSAALKRRGDGVIGLDNF) lines the NAD(+) pocket. Residue Y248 is the Proton acceptor of the active site.

This sequence belongs to the NAD(P)-dependent epimerase/dehydratase family. As to quaternary structure, homodimer. In roots, leaves, siliques, flowers, pollen and stems.

It is found in the golgi apparatus. The protein localises to the golgi stack membrane. It carries out the reaction UDP-alpha-D-glucuronate = UDP-alpha-D-galacturonate. Activated by glycerol, not effected by dimethyl sulfoxide and inhibited by high concentration of monovalent salts, UDP-xylose, UDP-arabinose or UDP. Its function is as follows. Involved in the synthesis of the negatively charged monosaccharide that forms the backbone of pectic cell wall components. The polypeptide is UDP-glucuronate 4-epimerase 4 (GAE4) (Arabidopsis thaliana (Mouse-ear cress)).